A 596-amino-acid chain; its full sequence is Potassium-transporting ATPase potassium-binding subunit (596 aa).

Helical transmembrane passes span 6–26 (ILTIVLYVGVLLLLAYPLGGF), 67–87 (AIGLIAFNILGVLFVFGLQLF), 136–156 (GLTTQNFLSAASGIVVVIALI), 177–197 (ITLYVLVPISVVYAIFLVGQG), 283–303 (LSNFIQILSIFLIPAALCFTF), 314–334 (WVVLVTMILIFLTVTFAAVHF), 413–433 (GLYGMLVFAILAVFIAGLMIG), 450–470 (MVAIAILVTPILALVGTAIAV), 518–538 (MLAIAMWFGRFGVIVPVLALA), and 560–580 (LFIVLLAGTVILVGALNYVPA).

This sequence belongs to the KdpA family. The system is composed of three essential subunits: KdpA, KdpB and KdpC.

The protein localises to the cell inner membrane. Functionally, part of the high-affinity ATP-driven potassium transport (or Kdp) system, which catalyzes the hydrolysis of ATP coupled with the electrogenic transport of potassium into the cytoplasm. This subunit binds the periplasmic potassium ions and delivers the ions to the membrane domain of KdpB through an intramembrane tunnel. The chain is Potassium-transporting ATPase potassium-binding subunit from Polynucleobacter asymbioticus (strain DSM 18221 / CIP 109841 / QLW-P1DMWA-1) (Polynucleobacter necessarius subsp. asymbioticus).